A 305-amino-acid chain; its full sequence is Acetylglutamate kinase (305 aa).

Residues 67–68 (GG), Arg-89, and Asn-190 contribute to the substrate site.

The protein belongs to the acetylglutamate kinase family. ArgB subfamily.

It localises to the cytoplasm. The enzyme catalyses N-acetyl-L-glutamate + ATP = N-acetyl-L-glutamyl 5-phosphate + ADP. Its pathway is amino-acid biosynthesis; L-arginine biosynthesis; N(2)-acetyl-L-ornithine from L-glutamate: step 2/4. Catalyzes the ATP-dependent phosphorylation of N-acetyl-L-glutamate. The protein is Acetylglutamate kinase of Bifidobacterium animalis subsp. lactis (strain AD011).